The following is a 573-amino-acid chain: Probable D-xylulose kinase A (573 aa).

Residues H97, R168, D284, and N285 each contribute to the substrate site. ATP-binding positions include W366, 471–472, and N475; that span reads GG.

This sequence belongs to the FGGY kinase family.

Its subcellular location is the cytoplasm. It catalyses the reaction D-xylulose + ATP = D-xylulose 5-phosphate + ADP + H(+). In terms of biological role, highly specific D-xylulose kinase which participates in the catabolism of xylose. Xylose is a major component of hemicelluloses such as xylan. Most fungi utilize D-xylose via three enzymatic reactions, xylose reductase (XR), xylitol dehydrogenase (XDH), and xylulokinase, to form xylulose 5-phosphate, which enters pentose phosphate pathway. This Aspergillus fumigatus (strain ATCC MYA-4609 / CBS 101355 / FGSC A1100 / Af293) (Neosartorya fumigata) protein is Probable D-xylulose kinase A (xkiA).